The primary structure comprises 685 residues: Putative pentatricopeptide repeat-containing protein At3g08820 (685 aa).

PPR repeat units follow at residues 75 to 109 (NIFL…GLYL), 110 to 144 (HGFT…GFNH), 145 to 175 (DVAA…IPDR), 176 to 210 (SVVT…GVKP), 211 to 245 (DSYF…EMQK), 246 to 276 (NSFV…MVEK), 277 to 311 (DIVT…NLKP), 312 to 346 (DQFS…EFLT), 347 to 381 (NLFM…DIVI), 383 to 412 (NAAI…GISP), 413 to 443 (DGST…ISCV), and 449 to 479 (TVEH…MPMR). The interval 484–559 (VWGALLSGCR…IPGYSWIELE (76 aa)) is type E motif. The segment at 560 to 590 (GKVHEFLADDKSHPLSDKIYAKLEDLGNEMR) is type E(+) motif. Residues 591–685 (LMGFVPTTEF…NGSCSCNDYW (95 aa)) form a type DYW motif region.

This sequence belongs to the PPR family. PCMP-H subfamily.

In Arabidopsis thaliana (Mouse-ear cress), this protein is Putative pentatricopeptide repeat-containing protein At3g08820 (PCMP-H84).